Here is an 824-residue protein sequence, read N- to C-terminus: Acyl-homoserine lactone acylase QuiP (824 aa).

An N-terminal signal peptide occupies residues 1 to 26; sequence MASPALRHFLPRFGAAAAAASFLSLA. The active-site Nucleophile is serine 264.

This sequence belongs to the peptidase S45 family. As to quaternary structure, heterodimer of an alpha subunit and a beta subunit processed from the same precursor.

The protein localises to the periplasm. The catalysed reaction is an N-acyl-L-homoserine lactone + H2O = L-homoserine lactone + a carboxylate. In terms of biological role, catalyzes the deacylation of acyl-homoserine lactone (AHL or acyl-HSL), releasing homoserine lactone (HSL) and the corresponding fatty acid. Possesses a specificity for the degradation of long-chain acyl-HSLs (side chains of seven or more carbons in length). The chain is Acyl-homoserine lactone acylase QuiP (quiP) from Pseudomonas syringae pv. syringae (strain B728a).